A 361-amino-acid polypeptide reads, in one-letter code: Peptide chain release factor 1 (361 aa).

Q236 is modified (N5-methylglutamine). Residues 285–309 (TAKDSARAADRKAQVGSGDRSERIR) are compositionally biased toward basic and acidic residues. Residues 285–311 (TAKDSARAADRKAQVGSGDRSERIRTY) are disordered.

This sequence belongs to the prokaryotic/mitochondrial release factor family. Post-translationally, methylated by PrmC. Methylation increases the termination efficiency of RF1.

The protein resides in the cytoplasm. Its function is as follows. Peptide chain release factor 1 directs the termination of translation in response to the peptide chain termination codons UAG and UAA. In Methylorubrum extorquens (strain CM4 / NCIMB 13688) (Methylobacterium extorquens), this protein is Peptide chain release factor 1.